The chain runs to 155 residues: Ribosome maturation factor RimP (155 aa).

This sequence belongs to the RimP family.

It localises to the cytoplasm. Its function is as follows. Required for maturation of 30S ribosomal subunits. The sequence is that of Ribosome maturation factor RimP from Prochlorococcus marinus (strain MIT 9312).